Here is a 1440-residue protein sequence, read N- to C-terminus: Gag-Pro-Pol polyprotein (1440 aa).

The N-myristoyl glycine; by host moiety is linked to residue G2. Residues E95–A116 form a disordered region. The PTAP/PSAP motif signature appears at P98 to P101. The PPXY motif signature appears at P109–Y112. CCHC-type zinc fingers lie at residues Q349–Q366 and G372–Q389. Residues V457–A535 form the Peptidase A2 domain. D462 serves as the catalytic For protease activity; shared with dimeric partner. One can recognise a Reverse transcriptase domain in the interval L593–I783. Mg(2+) contacts are provided by D659, D734, D735, D1019, E1052, D1074, D1135, D1208, and D1265. The region spanning I1010 to L1143 is the RNase H type-1 domain. The Integrase catalytic domain maps to R1197–P1366. A DNA-binding region (integrase-type) is located at residues K1371–C1420.

As to quaternary structure, interacts with human TSG101. This interaction is essential for budding and release of viral particles. The cofactor is Mg(2+). Specific enzymatic cleavages by the viral protease yield mature proteins. The polyprotein is cleaved during and after budding, this process is termed maturation. The protease is autoproteolytically processed at its N- and C-termini.

The protein localises to the virion. The enzyme catalyses Endonucleolytic cleavage to 5'-phosphomonoester.. The catalysed reaction is DNA(n) + a 2'-deoxyribonucleoside 5'-triphosphate = DNA(n+1) + diphosphate. Functionally, matrix protein p19 targets Gag, Gag-Pro and Gag-Pro-Pol polyproteins to the plasma membrane via a multipartite membrane binding signal, that includes its myristoylated N-terminus. Also mediates nuclear localization of the preintegration complex. In terms of biological role, capsid protein p24 forms the conical core of the virus that encapsulates the genomic RNA-nucleocapsid complex. Its function is as follows. Nucleocapsid protein p15 is involved in the packaging and encapsidation of two copies of the genome. The aspartyl protease mediates proteolytic cleavages of Gag, Gag-Pro and Gag-Pro-Pol polyproteins during or shortly after the release of the virion from the plasma membrane. Cleavages take place as an ordered, step-wise cascade to yield mature proteins. This process is called maturation. Displays maximal activity during the budding process just prior to particle release from the cell. Hydrolyzes host EIF4GI in order to shut off the capped cellular mRNA translation. The resulting inhibition of cellular protein synthesis serves to ensure maximal viral gene expression and to evade host immune response. Functionally, reverse transcriptase (RT) is a multifunctional enzyme that converts the viral RNA genome into dsDNA in the cytoplasm, shortly after virus entry into the cell. This enzyme displays a DNA polymerase activity that can copy either DNA or RNA templates, and a ribonuclease H (RNase H) activity that cleaves the RNA strand of RNA-DNA heteroduplexes in a partially processive 3' to 5'-endonucleasic mode. Conversion of viral genomic RNA into dsDNA requires many steps. A tRNA-Pro binds to the primer-binding site (PBS) situated at the 5'-end of the viral RNA. RT uses the 3' end of the tRNA primer to perform a short round of RNA-dependent minus-strand DNA synthesis. The reading proceeds through the U5 region and ends after the repeated (R) region which is present at both ends of viral RNA. The portion of the RNA-DNA heteroduplex is digested by the RNase H, resulting in a ssDNA product attached to the tRNA primer. This ssDNA/tRNA hybridizes with the identical R region situated at the 3' end of viral RNA. This template exchange, known as minus-strand DNA strong stop transfer, can be either intra- or intermolecular. RT uses the 3' end of this newly synthesized short ssDNA to perform the RNA-dependent minus-strand DNA synthesis of the whole template. RNase H digests the RNA template except for a polypurine tract (PPT) situated at the 5' end of the genome. It is not clear if both polymerase and RNase H activities are simultaneous. RNase H probably can proceed both in a polymerase-dependent (RNA cut into small fragments by the same RT performing DNA synthesis) and a polymerase-independent mode (cleavage of remaining RNA fragments by free RTs). Secondly, RT performs DNA-directed plus-strand DNA synthesis using the PPT that has not been removed by RNase H as primer. PPT and tRNA primers are then removed by RNase H. The 3' and 5' ssDNA PBS regions hybridize to form a circular dsDNA intermediate. Strand displacement synthesis by RT to the PBS and PPT ends produces a blunt ended, linear dsDNA copy of the viral genome that includes long terminal repeats (LTRs) at both ends. In terms of biological role, integrase catalyzes viral DNA integration into the host chromosome, by performing a series of DNA cutting and joining reactions. This enzyme activity takes place after virion entry into a cell and reverse transcription of the RNA genome in dsDNA. The first step in the integration process is 3' processing. This step requires a complex comprising the viral genome, matrix protein, and integrase. This complex is called the pre-integration complex (PIC). The integrase protein removes 2 nucleotides from each 3' end of the viral DNA, leaving recessed dinucleotides OH's at the 3' ends. In the second step, the PIC access cell chromosomes during cell division. The third step, termed strand transfer, the integrase protein joins the previously processed 3' ends to the 5'-ends of strands of target cellular DNA at the site of integration. The 5'-ends are produced by integrase-catalyzed staggered cuts, 5 bp apart. A Y-shaped, gapped, recombination intermediate results, with the 5'-ends of the viral DNA strands and the 3' ends of target DNA strands remaining unjoined, flanking a gap of 5 bp. The last step is viral DNA integration into host chromosome. This involves host DNA repair synthesis in which the 5 bp gaps between the unjoined strands (see above) are filled in and then ligated. The protein is Gag-Pro-Pol polyprotein (gag-pro-pol) of Human T-cell leukemia virus 3 (strain 2026ND) (HTLV-3).